The primary structure comprises 869 residues: Phenylalanine--tRNA ligase beta subunit (869 aa).

The tRNA-binding domain maps to 41–162 (SQVTGPIVVG…QYGFSEAEYE (122 aa)). The B5 domain maps to 443–519 (PRAKAIHFKA…RLVGYDQIPI (77 aa)). Mg(2+) contacts are provided by aspartate 497, aspartate 503, glutamate 506, and glutamate 507. The FDX-ACB domain occupies 776–868 (STFPPVKQDL…EAAEIGAQLR (93 aa)).

This sequence belongs to the phenylalanyl-tRNA synthetase beta subunit family. Type 1 subfamily. In terms of assembly, tetramer of two alpha and two beta subunits. The cofactor is Mg(2+).

The protein resides in the cytoplasm. It catalyses the reaction tRNA(Phe) + L-phenylalanine + ATP = L-phenylalanyl-tRNA(Phe) + AMP + diphosphate + H(+). The chain is Phenylalanine--tRNA ligase beta subunit from Bifidobacterium longum (strain NCC 2705).